An 84-amino-acid polypeptide reads, in one-letter code: MKVSVLITLAVLGVMFLLTSAEERGSDQMDSPAWLKSMERIFQSEERECRWLFGGCEKDSDCCEHLGCRRTKPSWCGWDFTFGK.

The signal sequence occupies residues 1–21 (MKVSVLITLAVLGVMFLLTSA). Residues 22-47 (EERGSDQMDSPAWLKSMERIFQSEER) constitute a propeptide that is removed on maturation. Intrachain disulfides connect Cys49–Cys63, Cys56–Cys68, and Cys62–Cys76.

It belongs to the neurotoxin 10 (Hwtx-1) family. 05 (F4a) subfamily. As to expression, expressed by the venom gland.

Its subcellular location is the secreted. Probable ion channel inhibitor. The chain is U21-theraphotoxin-Cg1c from Chilobrachys guangxiensis (Chinese earth tiger tarantula).